A 115-amino-acid chain; its full sequence is Protein translation factor SUI1 homolog (115 aa).

It belongs to the SUI1 family.

In terms of biological role, probably involved in translation. This chain is Protein translation factor SUI1 homolog (TIF), found in Zea mays (Maize).